The primary structure comprises 486 residues: Glutamyl-tRNA(Gln) amidotransferase subunit A (486 aa).

Catalysis depends on charge relay system residues Lys-74 and Ser-149. Ser-173 (acyl-ester intermediate) is an active-site residue.

Belongs to the amidase family. GatA subfamily. As to quaternary structure, heterotrimer of A, B and C subunits.

It catalyses the reaction L-glutamyl-tRNA(Gln) + L-glutamine + ATP + H2O = L-glutaminyl-tRNA(Gln) + L-glutamate + ADP + phosphate + H(+). Its function is as follows. Allows the formation of correctly charged Gln-tRNA(Gln) through the transamidation of misacylated Glu-tRNA(Gln) in organisms which lack glutaminyl-tRNA synthetase. The reaction takes place in the presence of glutamine and ATP through an activated gamma-phospho-Glu-tRNA(Gln). This Prochlorococcus marinus (strain NATL2A) protein is Glutamyl-tRNA(Gln) amidotransferase subunit A.